We begin with the raw amino-acid sequence, 158 residues long: Large ribosomal subunit protein uL13 (158 aa).

It belongs to the universal ribosomal protein uL13 family. In terms of assembly, part of the 50S ribosomal subunit.

Its function is as follows. This protein is one of the early assembly proteins of the 50S ribosomal subunit, although it is not seen to bind rRNA by itself. It is important during the early stages of 50S assembly. This chain is Large ribosomal subunit protein uL13, found in Rickettsia canadensis (strain McKiel).